Here is a 384-residue protein sequence, read N- to C-terminus: UDP-4-amino-4-deoxy-L-arabinose--oxoglutarate aminotransferase (384 aa).

Lys182 is subject to N6-(pyridoxal phosphate)lysine.

This sequence belongs to the DegT/DnrJ/EryC1 family. ArnB subfamily. In terms of assembly, homodimer. Pyridoxal 5'-phosphate serves as cofactor.

It catalyses the reaction UDP-4-amino-4-deoxy-beta-L-arabinose + 2-oxoglutarate = UDP-beta-L-threo-pentopyranos-4-ulose + L-glutamate. Its pathway is nucleotide-sugar biosynthesis; UDP-4-deoxy-4-formamido-beta-L-arabinose biosynthesis; UDP-4-deoxy-4-formamido-beta-L-arabinose from UDP-alpha-D-glucuronate: step 2/3. The protein operates within bacterial outer membrane biogenesis; lipopolysaccharide biosynthesis. Catalyzes the conversion of UDP-4-keto-arabinose (UDP-Ara4O) to UDP-4-amino-4-deoxy-L-arabinose (UDP-L-Ara4N). The modified arabinose is attached to lipid A and is required for resistance to polymyxin and cationic antimicrobial peptides. This Yersinia pseudotuberculosis serotype O:1b (strain IP 31758) protein is UDP-4-amino-4-deoxy-L-arabinose--oxoglutarate aminotransferase.